The following is an 814-amino-acid chain: S-layer protein sap (814 aa).

The N-terminal stretch at 1–29 is a signal peptide; that stretch reads MAKTNSYKKVIAGTMTAAMVAGVVSPVAA. SLH domains lie at 30-93, 94-150, and 152-214; these read AGKT…DAKP, SFAD…KVNG, and PATK…AAKV. Residues 403–479 form the BIG2 domain; it reads FTSKDFKQNN…TVKDSKGKEL (77 aa).

In terms of processing, probably glycosylated.

It is found in the secreted. Its subcellular location is the cell wall. The protein localises to the S-layer. Functionally, the S-layer is a paracrystalline mono-layered assembly of proteins which coat the surface of bacteria. This is S-layer protein sap (sap) from Bacillus anthracis.